We begin with the raw amino-acid sequence, 368 residues long: Putative F-box/kelch-repeat protein At5g02995 (368 aa).

Positions 35 to 84 (SLYWNDPTEDCVWNCLARISRFHYPTLSLVSKGFRSLIASPELEATRSFI) constitute an F-box domain. Kelch repeat units follow at residues 140–186 (DIYI…IVDK) and 187–233 (KIYV…VSGG).

The sequence is that of Putative F-box/kelch-repeat protein At5g02995 from Arabidopsis thaliana (Mouse-ear cress).